We begin with the raw amino-acid sequence, 530 residues long: Glutamate--cysteine ligase (530 aa).

It belongs to the glutamate--cysteine ligase type 1 family. Type 1 subfamily.

The enzyme catalyses L-cysteine + L-glutamate + ATP = gamma-L-glutamyl-L-cysteine + ADP + phosphate + H(+). Its pathway is sulfur metabolism; glutathione biosynthesis; glutathione from L-cysteine and L-glutamate: step 1/2. This Azotobacter vinelandii (strain DJ / ATCC BAA-1303) protein is Glutamate--cysteine ligase.